Consider the following 277-residue polypeptide: MEVKGFIEIMRPHNCILAGIVGILGALVAYEGIPDIKTLTLIFWVVYFGCSGGNTANDYFDYEIDKINRPNRPLPRGAMSRRAALYYALLQYAIGSILAYFLNIRAFVFATIAYFLTFLYGWKLKPLPLVGNITVAALTAATPIYGAIGVGRIGLAGYLAICAFLVNVSREIMKDIEDIEGDKALGARTLPIIIGEKKAAIIAAIFGFLTVIASFLPVKVGIGLGYAPIIIVDIIIIKASIDVLRDPKAASKGQKLLKIATFVAVISFLAGALTKGV.

The next 7 membrane-spanning stretches (helical) occupy residues 16 to 36, 84 to 104, 107 to 127, 146 to 166, 200 to 220, 221 to 241, and 257 to 277; these read ILAG…IPDI, ALYY…FLNI, FVFA…LKPL, GAIG…AFLV, AIIA…PVKV, GIGL…KASI, and LKIA…TKGV.

This sequence belongs to the UbiA prenyltransferase family. DGGGP synthase subfamily. The cofactor is Mg(2+).

It is found in the cell membrane. The enzyme catalyses sn-3-O-(geranylgeranyl)glycerol 1-phosphate + (2E,6E,10E)-geranylgeranyl diphosphate = 2,3-bis-O-(geranylgeranyl)-sn-glycerol 1-phosphate + diphosphate. It participates in membrane lipid metabolism; glycerophospholipid metabolism. Its function is as follows. Prenyltransferase that catalyzes the transfer of the geranylgeranyl moiety of geranylgeranyl diphosphate (GGPP) to the C2 hydroxyl of (S)-3-O-geranylgeranylglyceryl phosphate (GGGP). This reaction is the second ether-bond-formation step in the biosynthesis of archaeal membrane lipids. In Pyrococcus furiosus (strain ATCC 43587 / DSM 3638 / JCM 8422 / Vc1), this protein is Digeranylgeranylglyceryl phosphate synthase.